A 312-amino-acid polypeptide reads, in one-letter code: Porphobilinogen deaminase (312 aa).

Cys241 carries the post-translational modification S-(dipyrrolylmethanemethyl)cysteine.

The protein belongs to the HMBS family. Monomer. Dipyrromethane is required as a cofactor.

The catalysed reaction is 4 porphobilinogen + H2O = hydroxymethylbilane + 4 NH4(+). The protein operates within porphyrin-containing compound metabolism; protoporphyrin-IX biosynthesis; coproporphyrinogen-III from 5-aminolevulinate: step 2/4. It functions in the pathway porphyrin-containing compound metabolism; chlorophyll biosynthesis. Its function is as follows. Tetrapolymerization of the monopyrrole PBG into the hydroxymethylbilane pre-uroporphyrinogen in several discrete steps. This chain is Porphobilinogen deaminase (hemC), found in Chlorobaculum parvum (strain DSM 263 / NCIMB 8327) (Chlorobium vibrioforme subsp. thiosulfatophilum).